The chain runs to 146 residues: Hemoglobin subunit beta (146 aa).

V1 bears the N-acetylvaline mark. The Globin domain maps to D2–H146. Position 44 is a phosphoserine (S44). K59 carries the N6-acetyllysine modification. Residue H63 coordinates heme b. Position 82 is an N6-acetyllysine (K82). H92 is a heme b binding site. C93 bears the S-nitrosocysteine mark. K144 is modified (N6-acetyllysine).

The protein belongs to the globin family. In terms of assembly, heterotetramer of two alpha chains and two beta chains. Red blood cells.

Functionally, involved in oxygen transport from the lung to the various peripheral tissues. In Rhinoceros unicornis (Greater Indian rhinoceros), this protein is Hemoglobin subunit beta (HBB).